Consider the following 108-residue polypeptide: UPF0060 membrane protein Nham_2004 (108 aa).

4 helical membrane passes run 5 to 25 (AAYV…WAWL), 31 to 51 (VWWL…LTLV), 61 to 81 (AAYG…VEGL), and 88 to 108 (LTGA…PRQI).

This sequence belongs to the UPF0060 family.

It localises to the cell inner membrane. This is UPF0060 membrane protein Nham_2004 from Nitrobacter hamburgensis (strain DSM 10229 / NCIMB 13809 / X14).